The sequence spans 232 residues: Small ribosomal subunit protein uS3 (232 aa).

One can recognise a KH type-2 domain in the interval 39–107; that stretch reads VRQFLTSELK…PAQINIAEVR (69 aa). Positions 213-232 are disordered; that stretch reads AANAVEPKGDKPKKQRKGRK.

This sequence belongs to the universal ribosomal protein uS3 family. Part of the 30S ribosomal subunit. Forms a tight complex with proteins S10 and S14.

In terms of biological role, binds the lower part of the 30S subunit head. Binds mRNA in the 70S ribosome, positioning it for translation. The sequence is that of Small ribosomal subunit protein uS3 from Vibrio parahaemolyticus serotype O3:K6 (strain RIMD 2210633).